The primary structure comprises 306 residues: UDP-3-O-acyl-N-acetylglucosamine deacetylase (306 aa).

Residues His79, His238, and Asp242 each coordinate Zn(2+). His265 serves as the catalytic Proton donor.

It belongs to the LpxC family. It depends on Zn(2+) as a cofactor.

It carries out the reaction a UDP-3-O-[(3R)-3-hydroxyacyl]-N-acetyl-alpha-D-glucosamine + H2O = a UDP-3-O-[(3R)-3-hydroxyacyl]-alpha-D-glucosamine + acetate. The protein operates within glycolipid biosynthesis; lipid IV(A) biosynthesis; lipid IV(A) from (3R)-3-hydroxytetradecanoyl-[acyl-carrier-protein] and UDP-N-acetyl-alpha-D-glucosamine: step 2/6. Functionally, catalyzes the hydrolysis of UDP-3-O-myristoyl-N-acetylglucosamine to form UDP-3-O-myristoylglucosamine and acetate, the committed step in lipid A biosynthesis. The protein is UDP-3-O-acyl-N-acetylglucosamine deacetylase of Shewanella violacea (strain JCM 10179 / CIP 106290 / LMG 19151 / DSS12).